Here is a 572-residue protein sequence, read N- to C-terminus: Sialate:O-sulfotransferase 2 (572 aa).

At 1-18 (MARSLLKIHRYFRRKPVR) the chain is on the cytoplasmic side. Residues 19-39 (FFSFILLYLTAGSLVFLHSGF) form a helical; Signal-anchor for type II membrane protein membrane-spanning segment. Residues 40–572 (SSDSSTAGIA…SGVPDEYRPR (533 aa)) lie on the Extracellular side of the membrane. WSC domains lie at 134-226 (RAKY…YRLE) and 237-331 (SAIF…YQTQ). Asn-196, Asn-249, Asn-262, and Asn-561 each carry an N-linked (GlcNAc...) asparagine glycan.

This sequence belongs to the WSCD family.

Its subcellular location is the golgi apparatus membrane. Its function is as follows. Sialate:O-sulfotransferase which catalyzes 8-O-sulfation at the Sia-glycan level using 3'-phosphoadenosine 5'-phosphosulfate (PAPS) as a donor, forming 8-O-sulfated Sia (Sia8S)-glycans. This Danio rerio (Zebrafish) protein is Sialate:O-sulfotransferase 2 (wscd2).